The primary structure comprises 90 residues: MGLKEDFEEHAEKAKTLPENTTNENKLILYGLYKQATVGPVNTSRPGMFNMRDRAKWDAWKAVEGKSTEEAMSDYITKVKQLLGEAAASA.

The segment covering 1–16 (MGLKEDFEEHAEKAKT) has biased composition (basic and acidic residues). The segment at 1 to 20 (MGLKEDFEEHAEKAKTLPEN) is disordered. Residues 3-88 (LKEDFEEHAE…VKQLLGEAAA (86 aa)) enclose the ACB domain. An acyl-CoA contacts are provided by residues 30–34 (YGLYK), Lys56, and Tyr75.

This sequence belongs to the ACBP family.

Functionally, binds medium- and long-chain acyl-CoA esters with very high affinity and may function as an intracellular carrier of acyl-CoA esters. The protein is Acyl-CoA-binding protein of Ricinus communis (Castor bean).